The chain runs to 127 residues: Aspartate 1-decarboxylase (127 aa).

Residue serine 25 is the Schiff-base intermediate with substrate; via pyruvic acid of the active site. Serine 25 is subject to Pyruvic acid (Ser). Residue threonine 57 coordinates substrate. The active-site Proton donor is tyrosine 58. A substrate-binding site is contributed by 73 to 75 (GAA).

Belongs to the PanD family. As to quaternary structure, heterooctamer of four alpha and four beta subunits. Requires pyruvate as cofactor. Post-translationally, is synthesized initially as an inactive proenzyme, which is activated by self-cleavage at a specific serine bond to produce a beta-subunit with a hydroxyl group at its C-terminus and an alpha-subunit with a pyruvoyl group at its N-terminus.

Its subcellular location is the cytoplasm. It catalyses the reaction L-aspartate + H(+) = beta-alanine + CO2. The protein operates within cofactor biosynthesis; (R)-pantothenate biosynthesis; beta-alanine from L-aspartate: step 1/1. Functionally, catalyzes the pyruvoyl-dependent decarboxylation of aspartate to produce beta-alanine. This Bacillus cereus (strain G9842) protein is Aspartate 1-decarboxylase.